The chain runs to 524 residues: Protopine 6-monooxygenase (524 aa).

3 helical membrane-spanning segments follow: residues 4 to 24, 232 to 252, and 319 to 339; these read LMLA…VFLY, LASL…DIFQ, and MIMG…SLLM. Cys-462 lines the heme pocket.

Belongs to the cytochrome P450 family. The cofactor is heme.

The protein resides in the endoplasmic reticulum membrane. The catalysed reaction is protopine + reduced [NADPH--hemoprotein reductase] + O2 = 6-hydroxyprotopine + oxidized [NADPH--hemoprotein reductase] + H2O + H(+). The protein operates within alkaloid biosynthesis. Catalyzes the conversion of protopine and allocryptopine to dihydrosanguinarine and dihydrochelerythrine, respectively, in the biosynthesis of isoquinoline alkaloid sanguinarine. The protein is Protopine 6-monooxygenase (CYP82N2v2) of Eschscholzia californica (California poppy).